The following is a 383-amino-acid chain: Presenilin-associated rhomboid-like protein A, mitochondrial (383 aa).

The transit peptide at 1–37 directs the protein to the mitochondrion; it reads MAWRSCFMKWTQINSINASSLCPKSTRLNIHPQQRCG. The interval 35 to 75 is disordered; it reads RCGFRKTERPSESKKGVQETEAEAGGHNRAVPPKPVPPLPP. The Mitochondrial matrix portion of the chain corresponds to 38–83; sequence FRKTERPSESKKGVQETEAEAGGHNRAVPPKPVPPLPPRRPHQLFR. The span at 39-52 shows a compositional bias: basic and acidic residues; that stretch reads RKTERPSESKKGVQ. The segment covering 66 to 75 has biased composition (pro residues); the sequence is PPKPVPPLPP. Residues 84-104 traverse the membrane as a helical segment; it reads PLVFTVGFTGCSFGAAAILQY. Topologically, residues 105 to 168 are mitochondrial intermembrane; that stretch reads ESVKSRVQLA…FWSGLSEGQK (64 aa). A helical membrane pass occupies residues 169 to 189; sequence TVTGIIALNTVVLCCWRVPAM. The Mitochondrial matrix portion of the chain corresponds to 190–219; sequence QRFLVKYFTSNPASKTRCLPMVLSSFSHYS. A helical membrane pass occupies residues 220-240; it reads VIHMVVNMYVLWTFSSSIVSL. Over 241 to 245 the chain is Mitochondrial intermembrane; sequence LGREQ. A helical transmembrane segment spans residues 246 to 266; that stretch reads FLALYLSGGVISTFVSYVFKT. Topologically, residues 267-271 are mitochondrial matrix; sequence ATGRL. A helical membrane pass occupies residues 272–292; it reads GPSLGASGSIMTVLAAVCTKI. The Nucleophile role is filled by S278. At 293–298 the chain is on the mitochondrial intermembrane side; sequence PEAKLG. Residues 299-319 form a helical membrane-spanning segment; the sequence is IVLLPVISFSAGNALKALVAL. Residues 320–334 lie on the Mitochondrial matrix side of the membrane; that stretch reads DIAGLVLGWRFFDHA. The helical transmembrane segment at 335–355 threads the bilayer; it reads AHLGGALFGVWYIGYGHELIW. Residue H336 is part of the active site. Residues 356–383 are Mitochondrial intermembrane-facing; that stretch reads RKREPLIKFWHELRNMSPGRPGPGGGGG.

The protein belongs to the peptidase S54 family.

The protein localises to the mitochondrion inner membrane. The catalysed reaction is Cleaves type-1 transmembrane domains using a catalytic dyad composed of serine and histidine that are contributed by different transmembrane domains.. Functionally, required for the control of apoptosis during postnatal growth. Essential for proteolytic processing of an antiapoptotic form of opa1 which prevents the release of mitochondrial cytochrome c in response to intrinsic apoptotic signals. The protein is Presenilin-associated rhomboid-like protein A, mitochondrial (parla) of Danio rerio (Zebrafish).